The following is a 185-amino-acid chain: MSDEGLAPGKRLSEIRQQQGLSQRRAAELSGLTHSAISTIEQDKVSPAISTLQKLLKVYGLSLSEFFSEPEKPDEPQVVINQDDLIEMGSQGVSMKLVHNGNPNRTLAMIFETYQPGTTTGERIKHQGEEIGTVLEGEIVLTINGQDYHLVAGQSYAINTGIPHSFSNTSAGICRIISAHTPTTF.

Positions 1–20 are disordered; that stretch reads MSDEGLAPGKRLSEIRQQQG. The HTH cro/C1-type domain occupies 12-66; the sequence is LSEIRQQQGLSQRRAAELSGLTHSAISTIEQDKVSPAISTLQKLLKVYGLSLSEF. The H-T-H motif DNA-binding region spans 23–42; it reads QRRAAELSGLTHSAISTIEQ. The 68-residue stretch at 111 to 178 folds into the Cupin type-2 domain; the sequence is FETYQPGTTT…TSAGICRIIS (68 aa).

Its pathway is amine and polyamine degradation; putrescine degradation [regulation]. Functionally, represses puuA, puuD and puuP. This chain is HTH-type transcriptional regulator PuuR (puuR), found in Escherichia coli (strain K12).